The following is a 1015-amino-acid chain: Probable beta-galactosidase B (1015 aa).

Positions 1-21 (MAHIYRLLLLLLSNLWFSAAA) are cleaved as a signal peptide. A glycan (N-linked (GlcNAc...) asparagine) is linked at Asn-23. Tyr-90 contributes to the substrate binding site. Asn-100 is a glycosylation site (N-linked (GlcNAc...) asparagine). Positions 135, 136, and 137 each coordinate substrate. The N-linked (GlcNAc...) asparagine glycan is linked to Asn-172. Asn-195 serves as a coordination point for substrate. The active-site Proton donor is the Glu-196. N-linked (GlcNAc...) asparagine glycosylation is present at Asn-211. Tyr-265 contributes to the substrate binding site. Cys-271 and Cys-324 form a disulfide bridge. Glu-308 (nucleophile) is an active-site residue. Tyr-373 lines the substrate pocket. Asn-411, Asn-441, Asn-456, Asn-554, Asn-679, Asn-735, Asn-775, Asn-821, and Asn-878 each carry an N-linked (GlcNAc...) asparagine glycan.

The protein belongs to the glycosyl hydrolase 35 family.

The protein localises to the secreted. It carries out the reaction Hydrolysis of terminal non-reducing beta-D-galactose residues in beta-D-galactosides.. Cleaves beta-linked terminal galactosyl residues from gangliosides, glycoproteins, and glycosaminoglycans. This is Probable beta-galactosidase B (lacB) from Neosartorya fischeri (strain ATCC 1020 / DSM 3700 / CBS 544.65 / FGSC A1164 / JCM 1740 / NRRL 181 / WB 181) (Aspergillus fischerianus).